The following is a 99-amino-acid chain: UPF0213 protein YazA (99 aa).

The 76-residue stretch at 4–79 (NNHFFYVVKC…KKLTRKKKEL (76 aa)) folds into the GIY-YIG domain.

Belongs to the UPF0213 family.

The protein is UPF0213 protein YazA (yazA) of Bacillus subtilis (strain 168).